The following is a 393-amino-acid chain: Acetate kinase (393 aa).

Position 7 (N7) interacts with Mg(2+). Residue K14 participates in ATP binding. R89 is a substrate binding site. Residue D146 is the Proton donor/acceptor of the active site. ATP-binding positions include 204 to 208 (HIGNG), 279 to 281 (DSR), and 327 to 331 (GIGEN). E379 serves as a coordination point for Mg(2+).

It belongs to the acetokinase family. Homodimer. It depends on Mg(2+) as a cofactor. The cofactor is Mn(2+).

The protein localises to the cytoplasm. The catalysed reaction is acetate + ATP = acetyl phosphate + ADP. The protein operates within metabolic intermediate biosynthesis; acetyl-CoA biosynthesis; acetyl-CoA from acetate: step 1/2. In terms of biological role, catalyzes the formation of acetyl phosphate from acetate and ATP. Can also catalyze the reverse reaction. The sequence is that of Acetate kinase from Acholeplasma laidlawii (strain PG-8A).